Reading from the N-terminus, the 130-residue chain is Protein ApaG (130 aa).

The ApaG domain maps to 3-127 (RALTRDIEVT…FSLDSPGLVR (125 aa)).

This is Protein ApaG from Sinorhizobium fredii (strain NBRC 101917 / NGR234).